Reading from the N-terminus, the 599-residue chain is Putative sensor histidine kinase NtrY-like (599 aa).

The next 4 helical transmembrane spans lie at 17–37 (ILIL…FYVI), 44–64 (FSTI…LGIL), 85–105 (IVIA…VFSV), and 285–305 (IMFI…GVLF). Positions 307–361 (AKIVKPIKKLVTATDKVKDGDLTVQVPENEVDKDEIGTLYAAFNRMIKQLSRQQR) constitute an HAMP domain. The region spanning 378 to 589 (KVAHEIKNPL…IIDIKFDLKE (212 aa)) is the Histidine kinase domain. His381 is subject to Phosphohistidine; by autocatalysis.

It is found in the cell membrane. It catalyses the reaction ATP + protein L-histidine = ADP + protein N-phospho-L-histidine.. Its function is as follows. Member of the two-component regulatory system RP614/RP562. In Rickettsia prowazekii (strain Madrid E), this protein is Putative sensor histidine kinase NtrY-like.